The chain runs to 167 residues: 18.8 kDa class II heat shock protein (167 aa).

The 119-residue stretch at 49-167 (DAKAMAATPA…KPKTVEVKVA (119 aa)) folds into the sHSP domain.

This sequence belongs to the small heat shock protein (HSP20) family.

Its subcellular location is the cytoplasm. The chain is 18.8 kDa class II heat shock protein (SHSP-2) from Ipomoea nil (Japanese morning glory).